A 332-amino-acid chain; its full sequence is MIRIAINGFGRIGRLVLRLALQRKDIEVVAVNDPFISNDYAAYMVKYDSTHGRYKGTVSHDDKHIIIDGVKIATYQERDPANLPWGSLKIDVAVDSTGVFKELDTAQKHIDAGAKKVVITAPSSSAPMFVVGVNHTKYTPDKKIVSNASCTTNCLAPLAKVINDAFGIEEGLMTTVHSMTATQKTVDGPSHKDWRGGRTASGNIIPSSTGAAKAVGKVLPELQGKLTGMAFRVPTVDVSVVDLTVKLEKEATYDQIKKAVKAAAEGPMKGVLGYTEDAVVSSDFLGDTHASIFDASAGIQLSPKFVKLISWYDNEYGYSARVVDLIEYVAKA.

4 residues coordinate NAD(+): Arg11, Ile12, Asp33, and Thr120. Residues 149 to 151 (SCT), Thr180, 209 to 210 (TG), and Arg232 each bind D-glyceraldehyde 3-phosphate. Residue Cys150 is the Nucleophile of the active site. NAD(+)-binding residues include Asn314 and Tyr318.

This sequence belongs to the glyceraldehyde-3-phosphate dehydrogenase family. Homotetramer.

It is found in the cytoplasm. The catalysed reaction is D-glyceraldehyde 3-phosphate + phosphate + NAD(+) = (2R)-3-phospho-glyceroyl phosphate + NADH + H(+). The enzyme catalyses NADH + H2O = (6R)-NADHX. It carries out the reaction NADH + H2O = (6S)-NADHX. It catalyses the reaction NADPH + H2O = (6R)-NADPHX. The catalysed reaction is NADPH + H2O = (6S)-NADPHX. It functions in the pathway carbohydrate degradation; glycolysis; pyruvate from D-glyceraldehyde 3-phosphate: step 1/5. Functionally, glyceraldehyde-3-phosphate dehydrogenase (GAPDH) involved in glycolysis and gluconeogenesis. Catalyzes the reaction of glyceraldehyde-3-phosphate to 1,3 bis-phosphoglycerate. The contribution of the TDH1, TDH2, and TDH3 to the total glyceraldehyde-3-phosphate dehydrogenase activity is 10-15, 25-30, and 50-60%, respectively. May be involved in a process other than glycolysis because it is synthesized by cells in stationary phase. As a side activity, catalyzes the hydration of the nicotinamide ring of NADH or NADPH at the C6 position to give the corresponding hydrates, NADHX and NADPHX, which exist as R and S epimers, that cannot act as electron donors or acceptors and inhibit several dehydrogenases, making them toxic. In Saccharomyces cerevisiae (strain ATCC 204508 / S288c) (Baker's yeast), this protein is Glyceraldehyde-3-phosphate dehydrogenase 1.